The following is a 153-amino-acid chain: Small ribosomal subunit protein uS13 (153 aa).

Belongs to the universal ribosomal protein uS13 family. Part of the 30S ribosomal subunit. Forms a loose heterodimer with protein S19. Forms two bridges to the 50S subunit in the 70S ribosome.

Located at the top of the head of the 30S subunit, it contacts several helices of the 16S rRNA. In the 70S ribosome it contacts the 23S rRNA (bridge B1a) and protein L5 of the 50S subunit (bridge B1b), connecting the 2 subunits; these bridges are implicated in subunit movement. This is Small ribosomal subunit protein uS13 from Pyrobaculum islandicum (strain DSM 4184 / JCM 9189 / GEO3).